Reading from the N-terminus, the 85-residue chain is Toxin BmKT (85 aa).

Residues 1–19 (MNYLVFFSLALLLMTGVES) form the signal peptide. In terms of domain architecture, LCN-type CS-alpha/beta spans 21–83 (RDGYIADDKN…VPIRVPGKCN (63 aa)). 4 cysteine pairs are disulfide-bonded: Cys-31–Cys-82, Cys-35–Cys-55, Cys-41–Cys-65, and Cys-45–Cys-67.

Belongs to the long (4 C-C) scorpion toxin superfamily. Sodium channel inhibitor family. Alpha subfamily. Expressed by the venom gland.

The protein localises to the secreted. In terms of biological role, binds to sodium channels (Nav) and inhibits the inactivation of the activated channels, thereby blocking neuronal transmission. Tested on mice, has antitumor effect and strong inhibitory effect on pain. This Olivierus martensii (Manchurian scorpion) protein is Toxin BmKT.